A 308-amino-acid chain; its full sequence is Glutaminase (308 aa).

Positions 66, 117, 161, 168, 192, 244, and 262 each coordinate substrate.

The protein belongs to the glutaminase family. As to quaternary structure, homotetramer.

It carries out the reaction L-glutamine + H2O = L-glutamate + NH4(+). The protein is Glutaminase of Shigella dysenteriae serotype 1 (strain Sd197).